Reading from the N-terminus, the 133-residue chain is Ribosome-binding factor A (133 aa).

Belongs to the RbfA family. In terms of assembly, monomer. Binds 30S ribosomal subunits, but not 50S ribosomal subunits or 70S ribosomes.

The protein resides in the cytoplasm. Its function is as follows. One of several proteins that assist in the late maturation steps of the functional core of the 30S ribosomal subunit. Associates with free 30S ribosomal subunits (but not with 30S subunits that are part of 70S ribosomes or polysomes). Required for efficient processing of 16S rRNA. May interact with the 5'-terminal helix region of 16S rRNA. The protein is Ribosome-binding factor A of Bordetella parapertussis (strain 12822 / ATCC BAA-587 / NCTC 13253).